The sequence spans 99 residues: MAKRPTETERCIESLIAIFQKHAGRDGNNTKISKTEFLIFMNTELAAFTQNQKDPGVLDRMMKKLDLDSDGQLDFQEFLNLIGGLAIACHDSFIKSTQK.

Met1 is subject to N-acetylmethionine. Thr8 bears the Phosphothreonine mark. EF-hand domains follow at residues 10-47 and 53-88; these read RCIE…ELAA and KDPG…LAIA. Positions 29, 31, 36, 66, 68, 70, 72, and 77 each coordinate Ca(2+).

It belongs to the S-100 family. As to quaternary structure, homodimer; disulfide-linked. In terms of processing, phosphorylation at Thr-8 significantly suppresses homodimerization and promotes association with NCL/nucleolin which induces nuclear translocation.

The protein resides in the cytoplasm. The protein localises to the nucleus. Its function is as follows. Facilitates the differentiation and the cornification of keratinocytes. The protein is Protein S100-A11 (S100A11) of Sus scrofa (Pig).